The sequence spans 355 residues: MPFLGQDWRSPGQSWVKTADGWKRFLDEKSGSFVSDLGSYCSKEVYNKENLFNSLNYDVAAKKRKKDMLNSKTKTQYFHQEKWIYVHKGSTKERHGYCTLGEAFNRLDFSTAILDSRRFNYVVRLLELIAKSQLTSLSGIAQKNFMNILEKVVLKVLEDQQNIRLIRELLQTLYTSLCTLVQRVGKSVLVGNINMWVYRMETILHWQQQLNNIQITRPAFKGLTFTDLPLCLQLNIMQRLSDGRDLVSLGQVAPDLHVLSEDRLLWKKLCQYHFSERQIRKRLILSDKGQLDWKKMYFKLARCYPRKEQYGDTLQLCRHCHILSWKGTDHPCTANNPESCSISLSPQDFINLFKF.

A Nuclear localization signal motif is present at residues 62-67 (KKRKKD). A Nuclear export signal motif is present at residues 169–173 (LLQTL). Residues 223–271 (LTFTDLPLCLQLNIMQRLSDGRDLVSLGQVAPDLHVLSEDRLLWKKLCQ) form the F-box domain. A Bipartite nuclear localization signal motif is present at residues 280–295 (RKRLILSDKGQLDWKK).

In terms of assembly, part of the SCF (SKP1-CUL1-F-box) E3 ubiquitin-protein ligase complex SCF(FBXO32) formed of CUL1, SKP1, RBX1 and FBXO32.

Its subcellular location is the cytoplasm. The protein resides in the nucleus. It participates in protein modification; protein ubiquitination. Its function is as follows. Substrate recognition component of a SCF (SKP1-CUL1-F-box protein) E3 ubiquitin-protein ligase complex which mediates the ubiquitination and subsequent proteasomal degradation of target proteins. Probably recognizes and binds to phosphorylated target proteins during skeletal muscle atrophy. Recognizes TERF1. In Bos taurus (Bovine), this protein is F-box only protein 32 (FBXO32).